A 67-amino-acid polypeptide reads, in one-letter code: DNA-directed RNA polymerase subunit omega (67 aa).

Belongs to the RNA polymerase subunit omega family. In terms of assembly, the RNAP catalytic core consists of 2 alpha, 1 beta, 1 beta' and 1 omega subunit. When a sigma factor is associated with the core the holoenzyme is formed, which can initiate transcription.

It carries out the reaction RNA(n) + a ribonucleoside 5'-triphosphate = RNA(n+1) + diphosphate. Its function is as follows. Promotes RNA polymerase assembly. Latches the N- and C-terminal regions of the beta' subunit thereby facilitating its interaction with the beta and alpha subunits. This Ralstonia pickettii (strain 12J) protein is DNA-directed RNA polymerase subunit omega.